A 375-amino-acid chain; its full sequence is MFNIIKNDKNSNARIGVLELPHGKVTTPCFMPVGTLGVMKALKHDVLEKLGCNLMLANTYHLYLRPGIDVIKEYGSLHNFTTWNKNFLTDSGGFQVFSLSNFRKIETEGVDFKSHIDGSRHYFTPESVFKMQEIFESDIIMALDICSSYGIDYSEASLYANITTSWARRTLRAYENRKEGYDGFLFLITQGNFFKDLRKRSTEAILELNSPGIAIGGISVGEPRDKYLEILEYNSSLIPKDKPKYVMGIGTPHYILDAIYYGIDIFDCVNPTRIARHGSLLTDNGILRIKRAGFNVDTSPIEQDCSCTLCTRYSRGYLRHLIKSGETLGVMLASEHNIHYMFRLIQKARNAIMNDDFTQFRKLYLSKYDEGNFNE.

Aspartate 90 (proton acceptor) is an active-site residue. Substrate is bound by residues 90–94 (DSGGF), aspartate 144, glutamine 190, and glycine 217. The tract at residues 248-254 (GIGTPHY) is RNA binding. Residue aspartate 267 is the Nucleophile of the active site. The RNA binding; important for wobble base 34 recognition stretch occupies residues 272–276 (TRIAR). Zn(2+) is bound by residues cysteine 305, cysteine 307, cysteine 310, and histidine 336.

This sequence belongs to the queuine tRNA-ribosyltransferase family. Homodimer. Within each dimer, one monomer is responsible for RNA recognition and catalysis, while the other monomer binds to the replacement base PreQ1. Requires Zn(2+) as cofactor.

The enzyme catalyses 7-aminomethyl-7-carbaguanine + guanosine(34) in tRNA = 7-aminomethyl-7-carbaguanosine(34) in tRNA + guanine. Its pathway is tRNA modification; tRNA-queuosine biosynthesis. Functionally, catalyzes the base-exchange of a guanine (G) residue with the queuine precursor 7-aminomethyl-7-deazaguanine (PreQ1) at position 34 (anticodon wobble position) in tRNAs with GU(N) anticodons (tRNA-Asp, -Asn, -His and -Tyr). Catalysis occurs through a double-displacement mechanism. The nucleophile active site attacks the C1' of nucleotide 34 to detach the guanine base from the RNA, forming a covalent enzyme-RNA intermediate. The proton acceptor active site deprotonates the incoming PreQ1, allowing a nucleophilic attack on the C1' of the ribose to form the product. After dissociation, two additional enzymatic reactions on the tRNA convert PreQ1 to queuine (Q), resulting in the hypermodified nucleoside queuosine (7-(((4,5-cis-dihydroxy-2-cyclopenten-1-yl)amino)methyl)-7-deazaguanosine). The chain is Queuine tRNA-ribosyltransferase from Borrelia hermsii (strain HS1 / DAH).